The sequence spans 172 residues: Dual-action ribosomal maturation protein DarP (172 aa).

The protein belongs to the DarP family.

It localises to the cytoplasm. Its function is as follows. Member of a network of 50S ribosomal subunit biogenesis factors which assembles along the 30S-50S interface, preventing incorrect 23S rRNA structures from forming. Promotes peptidyl transferase center (PTC) maturation. In Ectopseudomonas mendocina (strain ymp) (Pseudomonas mendocina), this protein is Dual-action ribosomal maturation protein DarP.